Reading from the N-terminus, the 184-residue chain is dITP/XTP pyrophosphatase (184 aa).

7 to 12 serves as a coordination point for substrate; the sequence is TSNPGK. 2 residues coordinate Mg(2+): Glu36 and Asp65. The active-site Proton acceptor is the Asp65. Substrate-binding positions include Ser66, 139 to 142, Lys162, and 167 to 168; these read FGFD and HR.

It belongs to the HAM1 NTPase family. In terms of assembly, homodimer. It depends on Mg(2+) as a cofactor.

It catalyses the reaction XTP + H2O = XMP + diphosphate + H(+). The enzyme catalyses dITP + H2O = dIMP + diphosphate + H(+). The catalysed reaction is ITP + H2O = IMP + diphosphate + H(+). Pyrophosphatase that catalyzes the hydrolysis of nucleoside triphosphates to their monophosphate derivatives, with a high preference for the non-canonical purine nucleotides XTP (xanthosine triphosphate), dITP (deoxyinosine triphosphate) and ITP. Seems to function as a house-cleaning enzyme that removes non-canonical purine nucleotides from the nucleotide pool, thus preventing their incorporation into DNA/RNA and avoiding chromosomal lesions. The sequence is that of dITP/XTP pyrophosphatase from Thermococcus kodakarensis (strain ATCC BAA-918 / JCM 12380 / KOD1) (Pyrococcus kodakaraensis (strain KOD1)).